The sequence spans 643 residues: Thioredoxin reductase 3 (643 aa).

The tract at residues 1 to 53 is disordered; it reads MERSPPQSPGPGKAGDAPNRRSGHVRGARVLSPPGRRARLSSPGPSRSSEARE. Arg-26 carries the post-translational modification Asymmetric dimethylarginine; alternate. Arg-26 is modified (omega-N-methylarginine; alternate). 2 positions are modified to phosphoserine: Ser-41 and Ser-42. In terms of domain architecture, Glutaredoxin spans 56–156; the sequence is RRHLVGLIER…KLLQEDLAYD (101 aa). 158-187 is an FAD binding site; sequence DLIIIGGGSGGLSCAKEAAILGKKVMVLDF. Cysteines 203 and 208 form a disulfide. At Lys-379 the chain carries N6-succinyllysine. His-616 acts as the Proton acceptor in catalysis. Residues 641 to 642 constitute a cross-link (cysteinyl-selenocysteine (Cys-Sec)); that stretch reads CU. A non-standard amino acid (selenocysteine) is located at residue Sec-642.

The protein belongs to the class-I pyridine nucleotide-disulfide oxidoreductase family. As to quaternary structure, homodimer. FAD serves as cofactor.

It is found in the cytoplasm. It localises to the nucleus. The protein resides in the microsome. Its subcellular location is the endoplasmic reticulum. It carries out the reaction [thioredoxin]-dithiol + NADP(+) = [thioredoxin]-disulfide + NADPH + H(+). Its function is as follows. Displays thioredoxin reductase, glutaredoxin and glutathione reductase activities. Catalyzes disulfide bond isomerization. Promotes disulfide bond formation between GPX4 and various sperm proteins and may play a role in sperm maturation by promoting formation of sperm structural components. The sequence is that of Thioredoxin reductase 3 from Homo sapiens (Human).